The chain runs to 377 residues: Mitogen-activated protein kinase mpkC (377 aa).

A Protein kinase domain is found at tyrosine 20–leucine 299. ATP-binding positions include isoleucine 26 to valine 34 and lysine 49. Aspartate 141 serves as the catalytic Proton acceptor. Residue threonine 171 is modified to Phosphothreonine. The TXY motif lies at threonine 171–tyrosine 173. Tyrosine 173 is subject to Phosphotyrosine.

The protein belongs to the protein kinase superfamily. Ser/Thr protein kinase family. MAP kinase subfamily. HOG1 sub-subfamily. The cofactor is Mg(2+). Dually phosphorylated on Thr-171 and Tyr-173, which activates the enzyme.

The enzyme catalyses L-seryl-[protein] + ATP = O-phospho-L-seryl-[protein] + ADP + H(+). The catalysed reaction is L-threonyl-[protein] + ATP = O-phospho-L-threonyl-[protein] + ADP + H(+). Activated by tyrosine and threonine phosphorylation. In terms of biological role, mitogen-activated protein kinase required for growth on media where sorbitol or mannitol is the sole carbon source. In Neosartorya fischeri (strain ATCC 1020 / DSM 3700 / CBS 544.65 / FGSC A1164 / JCM 1740 / NRRL 181 / WB 181) (Aspergillus fischerianus), this protein is Mitogen-activated protein kinase mpkC (mpkc).